The primary structure comprises 208 residues: Flavin-dependent thymidylate synthase (208 aa).

The ThyX domain occupies 1 to 208 (MEVICKHYTP…QYLFEDCLKH (208 aa)). FAD-binding positions include S50 and 74-76 (RHR). Residues 71–74 (ELSR), 84–86 (SSR), and K147 each bind dUMP. A ThyX motif motif is present at residues 74 to 84 (RHRIASLSVKS). Residues 163–165 (NAR) and N169 contribute to the FAD site. DUMP is bound at residue R174. R174 functions as the Involved in ionization of N3 of dUMP, leading to its activation in the catalytic mechanism.

Belongs to the thymidylate synthase ThyX family. Homotetramer. The cofactor is FAD.

It catalyses the reaction dUMP + (6R)-5,10-methylene-5,6,7,8-tetrahydrofolate + NADPH + H(+) = dTMP + (6S)-5,6,7,8-tetrahydrofolate + NADP(+). The protein operates within pyrimidine metabolism; dTTP biosynthesis. Its function is as follows. Catalyzes the reductive methylation of 2'-deoxyuridine-5'-monophosphate (dUMP) to 2'-deoxythymidine-5'-monophosphate (dTMP) while utilizing 5,10-methylenetetrahydrofolate (mTHF) as the methyl donor, and NAD(P)H and FADH(2) as the reductant. The polypeptide is Flavin-dependent thymidylate synthase (Helicobacter pylori (strain ATCC 700392 / 26695) (Campylobacter pylori)).